Here is a 103-residue protein sequence, read N- to C-terminus: Histone H4 (103 aa).

Gly residues predominate over residues 1–14; that stretch reads MSGRGKGGKGLGKG. Residues 1–20 are disordered; it reads MSGRGKGGKGLGKGGAKRHR. Ser2 is modified (N-acetylserine). N6-acetyl-N6-methyllysine; alternate is present on residues Lys6 and Lys13. The DNA-binding element occupies 17–21; that stretch reads KRHRK. Lys21 bears the N6-methyllysine mark.

The protein belongs to the histone H4 family. The nucleosome is a histone octamer containing two molecules each of H2A, H2B, H3 and H4 assembled in one H3-H4 heterotetramer and two H2A-H2B heterodimers. The octamer wraps approximately 147 bp of DNA.

It is found in the nucleus. The protein resides in the chromosome. In terms of biological role, core component of nucleosome. Nucleosomes wrap and compact DNA into chromatin, limiting DNA accessibility to the cellular machineries which require DNA as a template. Histones thereby play a central role in transcription regulation, DNA repair, DNA replication and chromosomal stability. DNA accessibility is regulated via a complex set of post-translational modifications of histones, also called histone code, and nucleosome remodeling. This Solaster stimpsoni (Striped sun sea star) protein is Histone H4.